Consider the following 129-residue polypeptide: uncharacterized protein (129 aa).

Positions 34–57 are disordered; it reads SAPLRPPRELHAAPPPATPTQTVV.

This is an uncharacterized protein from Homo sapiens (Human).